We begin with the raw amino-acid sequence, 525 residues long: C6 finger transcription factor fsqA (525 aa).

A DNA-binding region (zn(2)-C6 fungal-type) is located at residues C12–C53. Disordered regions lie at residues R80 to M142, E204 to G260, and R327 to S371. The segment covering P95–H115 has biased composition (polar residues). Residues R327–E337 show a composition bias toward polar residues.

It is found in the nucleus. In terms of biological role, transcription factor that regulates the expression of the gene cluster that mediates the biosynthesis of the isoquinoline alkaloids fumisoquin A, fumisoquin B and fumisoquin C; as well as small amounts of fumipyrrole as a shunt metabolite. The products of the cluster lead to a brown coloration and are important for growth and conidiation. This chain is C6 finger transcription factor fsqA, found in Aspergillus fumigatus (strain ATCC MYA-4609 / CBS 101355 / FGSC A1100 / Af293) (Neosartorya fumigata).